The chain runs to 167 residues: Interferon gamma (167 aa).

The first 23 residues, 1–23 (MNYTSFIFAFQLCIILCSSGYYC), serve as a signal peptide directing secretion. At Gln24 the chain carries Pyrrolidone carboxylic acid. 2 N-linked (GlcNAc...) asparagine glycosylation sites follow: Asn39 and Asn107.

It belongs to the type II (or gamma) interferon family. Homodimer. Interacts with IFNGR1 (via extracellular domain); this interaction promotes IFNGR1 dimerization. In terms of tissue distribution, released primarily from activated T lymphocytes.

It is found in the secreted. Functionally, type II interferon produced by immune cells such as T-cells and NK cells that plays crucial roles in antimicrobial, antiviral, and antitumor responses by activating effector immune cells and enhancing antigen presentation. Primarily signals through the JAK-STAT pathway after interaction with its receptor IFNGR1 to affect gene regulation. Upon IFNG binding, IFNGR1 intracellular domain opens out to allow association of downstream signaling components JAK2, JAK1 and STAT1, leading to STAT1 activation, nuclear translocation and transcription of IFNG-regulated genes. Many of the induced genes are transcription factors such as IRF1 that are able to further drive regulation of a next wave of transcription. Plays a role in class I antigen presentation pathway by inducing a replacement of catalytic proteasome subunits with immunoproteasome subunits. In turn, increases the quantity, quality, and repertoire of peptides for class I MHC loading. Increases the efficiency of peptide generation also by inducing the expression of activator PA28 that associates with the proteasome and alters its proteolytic cleavage preference. Up-regulates as well MHC II complexes on the cell surface by promoting expression of several key molecules such as cathepsins B/CTSB, H/CTSH, and L/CTSL. Participates in the regulation of hematopoietic stem cells during development and under homeostatic conditions by affecting their development, quiescence, and differentiation. This is Interferon gamma (IFNG) from Felis catus (Cat).